A 50-amino-acid polypeptide reads, in one-letter code: Inter-alpha-trypsin inhibitor heavy chain H2 (50 aa).

Belongs to the ITIH family. I-alpha-I plasma protease inhibitors are assembled from one or two heavy chains (HC) and one light chain, bikunin. Inter-alpha-inhibitor (I-alpha-I) is composed of ITIH1/HC1, ITIH2/HC2 and bikunin. Post-translationally, phosphorylated by FAM20C in the extracellular medium.

It localises to the secreted. Functionally, may act as a carrier of hyaluronan in serum or as a binding protein between hyaluronan and other matrix protein, including those on cell surfaces in tissues to regulate the localization, synthesis and degradation of hyaluronan which are essential to cells undergoing biological processes. The protein is Inter-alpha-trypsin inhibitor heavy chain H2 (ITIH2) of Bos taurus (Bovine).